Here is a 215-residue protein sequence, read N- to C-terminus: Cytochrome b6 (215 aa).

A helical membrane pass occupies residues 32–52 (IFHCLGGITLTCFLVQVATGF). A heme c-binding site is contributed by Cys-35. Heme b is bound by residues His-86 and His-100. 3 consecutive transmembrane segments (helical) span residues 90–110 (ASMMVLMMILHVFRVYLTGGF), 116–136 (LTWVTGVVLAVLTASFGVTGY), and 186–206 (LHTFVLPLLTAVFMLMHFPMI). Heme b is bound by residues His-187 and His-202.

The protein belongs to the cytochrome b family. PetB subfamily. The 4 large subunits of the cytochrome b6-f complex are cytochrome b6, subunit IV (17 kDa polypeptide, PetD), cytochrome f and the Rieske protein, while the 4 small subunits are PetG, PetL, PetM and PetN. The complex functions as a dimer. The cofactor is heme b. Requires heme c as cofactor.

The protein resides in the plastid. Its subcellular location is the chloroplast thylakoid membrane. Functionally, component of the cytochrome b6-f complex, which mediates electron transfer between photosystem II (PSII) and photosystem I (PSI), cyclic electron flow around PSI, and state transitions. This Calycanthus floridus var. glaucus (Eastern sweetshrub) protein is Cytochrome b6.